Here is a 429-residue protein sequence, read N- to C-terminus: Serine--tRNA ligase (429 aa).

L-serine is bound at residue 229 to 231 (TAE). Position 260-262 (260-262 (RSE)) interacts with ATP. Glu-283 serves as a coordination point for L-serine. An ATP-binding site is contributed by 347 to 350 (EISS). Ser-383 provides a ligand contact to L-serine.

It belongs to the class-II aminoacyl-tRNA synthetase family. Type-1 seryl-tRNA synthetase subfamily. As to quaternary structure, homodimer. The tRNA molecule binds across the dimer.

The protein resides in the cytoplasm. It catalyses the reaction tRNA(Ser) + L-serine + ATP = L-seryl-tRNA(Ser) + AMP + diphosphate + H(+). The enzyme catalyses tRNA(Sec) + L-serine + ATP = L-seryl-tRNA(Sec) + AMP + diphosphate + H(+). The protein operates within aminoacyl-tRNA biosynthesis; selenocysteinyl-tRNA(Sec) biosynthesis; L-seryl-tRNA(Sec) from L-serine and tRNA(Sec): step 1/1. Functionally, catalyzes the attachment of serine to tRNA(Ser). Is also able to aminoacylate tRNA(Sec) with serine, to form the misacylated tRNA L-seryl-tRNA(Sec), which will be further converted into selenocysteinyl-tRNA(Sec). The sequence is that of Serine--tRNA ligase from Orientia tsutsugamushi (strain Ikeda) (Rickettsia tsutsugamushi).